The primary structure comprises 103 residues: NADH-quinone oxidoreductase subunit K (103 aa).

The next 3 membrane-spanning stretches (helical) occupy residues 6 to 26 (LSHFLILGAILFAISVVGIFL), 32 to 52 (LVLLMAIELMLLAVNMNFVAF), and 63 to 83 (IFVFFILTVAAAESAIGLAIL).

Belongs to the complex I subunit 4L family. As to quaternary structure, NDH-1 is composed of 14 different subunits. Subunits NuoA, H, J, K, L, M, N constitute the membrane sector of the complex.

It is found in the cell inner membrane. The catalysed reaction is a quinone + NADH + 5 H(+)(in) = a quinol + NAD(+) + 4 H(+)(out). NDH-1 shuttles electrons from NADH, via FMN and iron-sulfur (Fe-S) centers, to quinones in the respiratory chain. The immediate electron acceptor for the enzyme in this species is believed to be ubiquinone. Couples the redox reaction to proton translocation (for every two electrons transferred, four hydrogen ions are translocated across the cytoplasmic membrane), and thus conserves the redox energy in a proton gradient. This is NADH-quinone oxidoreductase subunit K from Dechloromonas aromatica (strain RCB).